We begin with the raw amino-acid sequence, 159 residues long: Eukaryotic translation initiation factor 5A-3 (159 aa).

Basic and acidic residues predominate over residues 1-12 (MSDEEHQFESKA). Positions 1–21 (MSDEEHQFESKADAGASKTYP) are disordered. Hypusine is present on lysine 52.

The protein belongs to the eIF-5A family. Post-translationally, lys-52 undergoes hypusination, a unique post-translational modification that consists in the addition of a butylamino group from spermidine to lysine side chain, leading to the formation of the unusual amino acid hypusine. eIF-5As are the only known proteins to undergo this modification, which is essential for their function.

In terms of biological role, translation factor that promotes translation elongation and termination, particularly upon ribosome stalling at specific amino acid sequence contexts. Binds between the exit (E) and peptidyl (P) site of the ribosome and promotes rescue of stalled ribosome: specifically required for efficient translation of polyproline-containing peptides as well as other motifs that stall the ribosome. Acts as a ribosome quality control (RQC) cofactor by joining the RQC complex to facilitate peptidyl transfer during CAT tailing step. This chain is Eukaryotic translation initiation factor 5A-3, found in Solanum lycopersicum (Tomato).